The primary structure comprises 215 residues: 3-isopropylmalate dehydratase small subunit (215 aa).

Belongs to the LeuD family. LeuD type 1 subfamily. In terms of assembly, heterodimer of LeuC and LeuD.

It carries out the reaction (2R,3S)-3-isopropylmalate = (2S)-2-isopropylmalate. Its pathway is amino-acid biosynthesis; L-leucine biosynthesis; L-leucine from 3-methyl-2-oxobutanoate: step 2/4. Functionally, catalyzes the isomerization between 2-isopropylmalate and 3-isopropylmalate, via the formation of 2-isopropylmaleate. In Xylella fastidiosa (strain 9a5c), this protein is 3-isopropylmalate dehydratase small subunit.